The sequence spans 878 residues: Indoleacetate decarboxylase (878 aa).

The PFL domain maps to 42–750; that stretch reads DRTKRMKERF…VTGATPDGRL (709 aa). Catalysis depends on Cys-500, which acts as the Cysteine radical intermediate. Glu-502 acts as the Proton acceptor in catalysis. The Glycine radical domain occupies 758–878; the sequence is GILSASPGTD…VIARTEYDAL (121 aa). At Gly-853 the chain carries Glycine radical.

It belongs to the glycyl radical enzyme (GRE) family. Homodimer (predominantly) and monomer. Post-translationally, requires the activating protein OsIADAE to generate the key active site glycyl radical on Gly-853 that is involved in catalysis.

It carries out the reaction (indol-3-yl)acetate + H(+) = skatole + CO2. Its pathway is amino-acid degradation. Its function is as follows. Glycyl radical enzyme that catalyzes the terminal step of tryptophan fermentation, the decarboxylation of indoleacetate to form skatole, a malodorous compound that contributes to the characteristic smell of animal feces. No activity is detected with phenylacetate or p-hydroxyphenylacetate as substrates, indicating high substrate specificity. This is Indoleacetate decarboxylase from Tractidigestivibacter scatoligenes (Olsenella scatoligenes).